We begin with the raw amino-acid sequence, 201 residues long: Cell division protein SepF (201 aa).

Basic and acidic residues predominate over residues 27–38 (VQERTSVQRDSR). Residues 27–99 (VQERTSVQRD…PRVQNKDSVR (73 aa)) are disordered. Positions 43–54 (QEASQRSHMTNS) are enriched in polar residues. A compositionally biased stretch (basic and acidic residues) spans 72-81 (NRQERQRVQR). Over residues 83–92 (NAYQQATPRV) the composition is skewed to polar residues.

This sequence belongs to the SepF family. As to quaternary structure, homodimer. Interacts with FtsZ.

It localises to the cytoplasm. In terms of biological role, cell division protein that is part of the divisome complex and is recruited early to the Z-ring. Probably stimulates Z-ring formation, perhaps through the cross-linking of FtsZ protofilaments. Its function overlaps with FtsA. The chain is Cell division protein SepF from Streptococcus agalactiae serotype Ia (strain ATCC 27591 / A909 / CDC SS700).